A 510-amino-acid chain; its full sequence is 2,3-bisphosphoglycerate-independent phosphoglycerate mutase (510 aa).

Mn(2+)-binding residues include Asp-14 and Ser-64. Ser-64 functions as the Phosphoserine intermediate in the catalytic mechanism. Substrate-binding positions include His-125, 155 to 156, Arg-187, Arg-193, 259 to 262, and Lys-332; these read RD and RADR. The Mn(2+) site is built by Asp-399, His-403, Asp-440, His-441, and His-459.

Belongs to the BPG-independent phosphoglycerate mutase family. As to quaternary structure, monomer. Requires Mn(2+) as cofactor.

The catalysed reaction is (2R)-2-phosphoglycerate = (2R)-3-phosphoglycerate. The protein operates within carbohydrate degradation; glycolysis; pyruvate from D-glyceraldehyde 3-phosphate: step 3/5. Catalyzes the interconversion of 2-phosphoglycerate and 3-phosphoglycerate. This chain is 2,3-bisphosphoglycerate-independent phosphoglycerate mutase, found in Pseudomonas syringae pv. syringae (strain B728a).